Consider the following 656-residue polypeptide: Chaperone protein HtpG (656 aa).

The a; substrate-binding stretch occupies residues methionine 1–arginine 364. Residues glutamate 365 to glutamine 583 are b. The tract at residues methionine 584–lysine 656 is c.

It belongs to the heat shock protein 90 family. As to quaternary structure, homodimer.

It localises to the cytoplasm. Molecular chaperone. Has ATPase activity. This is Chaperone protein HtpG from Psychrobacter arcticus (strain DSM 17307 / VKM B-2377 / 273-4).